The chain runs to 348 residues: MNPYRRATLLCSVGLGTTLTFASSHWLLAWMGLEINTLAITPLMAQHHHPRAVEATTKYFLTQATAAAMILFASTTNAWMTGEWSINDLSNPIASTMFMAALALKIGLAPMHFWMPEVLQGLDLLTGLILSTWQKLAPLALIIQTAQTIDPLLLTLLGISSTLVGGWGGLNQTQLRKILAYSSIAHMGWMIIVIQYAPQLTLIALGTYIIMTSAAFLTLKMSLTTKISTLATTWSKSPILTSTTALVLLSLGGLPPLTGFMPKWLILQELTKQDLPIIATAMALTALISLYFYLRLLYAMTLTISPNMINSTTPWRTQTTQTSLPLALFTTAALGLLPMAPAILMLTT.

9 consecutive transmembrane segments (helical) span residues 13–33, 60–80, 93–113, 149–169, 178–197, 202–219, 246–266, 274–294, and 326–346; these read VGLGTTLTFASSHWLLAWMGL, FLTQATAAAMILFASTTNAWM, IASTMFMAALALKIGLAPMHF, IDPLLLTLLGISSTLVGGWGG, ILAYSSIAHMGWMIIVIQYA, LIALGTYIIMTSAAFLTL, LVLLSLGGLPPLTGFMPKWLI, DLPIIATAMALTALISLYFYL, and LALFTTAALGLLPMAPAILML.

The protein belongs to the complex I subunit 2 family.

It localises to the mitochondrion inner membrane. The catalysed reaction is a ubiquinone + NADH + 5 H(+)(in) = a ubiquinol + NAD(+) + 4 H(+)(out). In terms of biological role, core subunit of the mitochondrial membrane respiratory chain NADH dehydrogenase (Complex I) that is believed to belong to the minimal assembly required for catalysis. Complex I functions in the transfer of electrons from NADH to the respiratory chain. The immediate electron acceptor for the enzyme is believed to be ubiquinone. In Cyprinus carpio (Common carp), this protein is NADH-ubiquinone oxidoreductase chain 2 (MT-ND2).